A 588-amino-acid polypeptide reads, in one-letter code: L-fucose isomerase (588 aa).

Catalysis depends on proton acceptor residues Glu-335 and Asp-359. The Mn(2+) site is built by Glu-335, Asp-359, and His-525.

Belongs to the L-fucose isomerase family. Requires Mn(2+) as cofactor.

It is found in the cytoplasm. It carries out the reaction L-fucose = L-fuculose. It functions in the pathway carbohydrate degradation; L-fucose degradation; L-lactaldehyde and glycerone phosphate from L-fucose: step 1/3. Converts the aldose L-fucose into the corresponding ketose L-fuculose. The sequence is that of L-fucose isomerase from Streptococcus pneumoniae serotype 4 (strain ATCC BAA-334 / TIGR4).